A 504-amino-acid polypeptide reads, in one-letter code: uncharacterized protein (504 aa).

The helical transmembrane segment at 26-46 (ILFLLLGLIILVNISINVTTV) threads the bilayer. Polar residues predominate over residues 103–112 (PTQCSSSSTH). 3 disordered regions span residues 103–180 (PTQC…TRPM), 313–402 (YDAR…PLTT), and 431–504 (QRLA…GKLN). Residues 113-128 (YFRKHSNDRRSRRRYC) show a composition bias toward basic residues. Over residues 135–147 (QIRQSNQQQSCHS) the composition is skewed to polar residues. Over residues 313-324 (YDARDQWRRGTE) the composition is skewed to basic and acidic residues. Residues 349-377 (SSQAHRQNFPSYTHSQPNHSPPQSVGYSS) are compositionally biased toward polar residues. 2 stretches are compositionally biased toward basic and acidic residues: residues 378 to 389 (RESHEVRRRAPD) and 467 to 478 (LELKRQVQENRG). Residues 494-504 (SLHRSRTGKLN) show a composition bias toward basic residues.

The protein resides in the membrane. This is an uncharacterized protein from Rattus norvegicus (Rat).